A 358-amino-acid polypeptide reads, in one-letter code: Protein-glutamate methylesterase/protein-glutamine glutaminase 1 (358 aa).

Residues 7–124 (SVLLVDDSAV…KNFLIDSAAE (118 aa)) form the Response regulatory domain. At Asp58 the chain carries 4-aspartylphosphate. Positions 170–358 (AQTTERIVAI…QEIHQAILHR (189 aa)) constitute a CheB-type methylesterase domain. Catalysis depends on residues Ser182, His208, and Asp304.

This sequence belongs to the CheB family. Phosphorylated by CheA. Phosphorylation of the N-terminal regulatory domain activates the methylesterase activity.

It localises to the cytoplasm. The catalysed reaction is [protein]-L-glutamate 5-O-methyl ester + H2O = L-glutamyl-[protein] + methanol + H(+). It carries out the reaction L-glutaminyl-[protein] + H2O = L-glutamyl-[protein] + NH4(+). Its function is as follows. Involved in chemotaxis. Part of a chemotaxis signal transduction system that modulates chemotaxis in response to various stimuli. Catalyzes the demethylation of specific methylglutamate residues introduced into the chemoreceptors (methyl-accepting chemotaxis proteins or MCP) by CheR. Also mediates the irreversible deamidation of specific glutamine residues to glutamic acid. The sequence is that of Protein-glutamate methylesterase/protein-glutamine glutaminase 1 from Pseudomonas savastanoi pv. phaseolicola (strain 1448A / Race 6) (Pseudomonas syringae pv. phaseolicola (strain 1448A / Race 6)).